Reading from the N-terminus, the 851-residue chain is DNA mismatch repair protein MutS (851 aa).

Residue 614–621 coordinates ATP; the sequence is GPNMGGKS.

It belongs to the DNA mismatch repair MutS family.

Its function is as follows. This protein is involved in the repair of mismatches in DNA. It is possible that it carries out the mismatch recognition step. This protein has a weak ATPase activity. The chain is DNA mismatch repair protein MutS from Yersinia pseudotuberculosis serotype O:1b (strain IP 31758).